The chain runs to 525 residues: M-phase inducer phosphatase 1 (525 aa).

Positions 1 to 42 (MELGPEPPHRRRLLFTCSPTPAPQPTGKVQFGASRAGGLSPV) are disordered. Positions 74–84 (MGSSESTDSGF) match the Phosphodegron motif. Ser-76 bears the Phosphoserine; by CHEK1 mark. Phosphoserine; by NEK11 is present on residues Ser-79, Ser-82, and Ser-88. At Ser-124 the chain carries Phosphoserine; by CHEK1 and CHEK2. Residues 141 to 143 (KEN) carry the KEN box motif. The residue at position 178 (Ser-178) is a Phosphoserine; by CHEK1. Residues 260–318 (FDSPSPCSSTSSCSTRAVKRADRSHEESPRGTKRRKSSEASPVKADVPEPTQLPHQSLS) are disordered. Low complexity predominate over residues 262-274 (SPSPCSSTSSCST). Positions 278-289 (KRADRSHEESPR) are enriched in basic and acidic residues. Phosphoserine; by CHEK1 and CHEK2 is present on residues Ser-283 and Ser-296. Residues 377–483 (LIKEFVIIDC…FFLKCQSHCE (107 aa)) enclose the Rhodanese domain. The active site involves Cys-432. Position 508 is a phosphothreonine; by CHEK1 (Thr-508). 2 positions are modified to phosphoserine; by PLK3: Ser-514 and Ser-520.

Belongs to the MPI phosphatase family. Interacts with CCNB1/cyclin B1. Interacts with YWHAE/14-3-3 epsilon when phosphorylated. Interacts with CUL1 specifically when CUL1 is neddylated and active. Interacts with BTRC/BTRCP1 and FBXW11/BTRCP2. Interactions with CUL1, BTRC and FBXW11 are enhanced upon DNA damage. Interacts with CHEK2; mediates CDC25A phosphorylation and degradation in response to infrared-induced DNA damages. Interacts with HSP90AB1; prevents heat shock-mediated CDC25A degradation and contributes to cell cycle progression. Phosphorylated by CHEK1 on Ser-76, Ser-124, Ser-178, Ser-283, Ser-296 and Thr-508 during checkpoint mediated cell cycle arrest. Also phosphorylated by CHEK2 on Ser-124, Ser-283, and Ser-296 during checkpoint mediated cell cycle arrest. Phosphorylation on Ser-178 and Thr-508 creates binding sites for YWHAE/14-3-3 epsilon which inhibits CDC25A. Phosphorylation on Ser-76, Ser-124, Ser-178, Ser-283 and Ser-296 may also promote ubiquitin-dependent proteolysis of CDC25A by the SCF complex. Phosphorylation of CDC25A at Ser-76 by CHEK1 primes it for subsequent phosphorylation at Ser-79, Ser-82 and Ser-88 by NEK11. Phosphorylation by NEK11 is required for BTRC-mediated polyubiquitination and degradation. Phosphorylation by PIM1 leads to an increase in phosphatase activity. Phosphorylated by PLK3 following DNA damage, leading to promote its ubiquitination and degradation. Post-translationally, ubiquitinated by the anaphase promoting complex/cyclosome (APC/C) ubiquitin ligase complex that contains FZR1/CDH1 during G1 phase leading to its degradation by the proteasome. Ubiquitinated by a SCF complex containing BTRC and FBXW11 during S phase leading to its degradation by the proteasome. Deubiquitination by USP17L2/DUB3 leads to its stabilization.

The enzyme catalyses O-phospho-L-tyrosyl-[protein] + H2O = L-tyrosyl-[protein] + phosphate. Stimulated by B-type cyclins. Stimulated by PIM1-mediated phosphorylation. In terms of biological role, tyrosine protein phosphatase which functions as a dosage-dependent inducer of mitotic progression. Directly dephosphorylates CDK1 and stimulates its kinase activity. Also dephosphorylates CDK2 in complex with cyclin-E, in vitro. The sequence is that of M-phase inducer phosphatase 1 (Cdc25a) from Rattus norvegicus (Rat).